Here is a 314-residue protein sequence, read N- to C-terminus: MAVRWWIIPMLLLVPGSSGAWEVLSLPFSLYNFYECGFKVDIEALDCDLARNVFGQHLAQELLFKSVKEFIESDNPSKPLVLSLHGWSGTGKTFVSSLLVKHLFKEGSQSRFVHFFSPVLHFPRVQNLEQYKVDLKGWIQGNLTACGRSLFVFEEMDKMHPGLIDAIVPFLGTSWVVYGSNYRKAIFLFISNAGGDDINEVALDFWRQRKDREDIRLHHLESAISKAVFSNPKHGFWQSQIINQHLIDVIVPFLPLRPSHVRQCVRTEMVQQGLEPEEVLVNNITDSFVYFPEDEKVFSSTGCKTVASRINYFV.

An N-terminal signal peptide occupies residues 1-19 (MAVRWWIIPMLLLVPGSSG). 86-93 (GWSGTGKT) lines the ATP pocket. N-linked (GlcNAc...) asparagine glycosylation is found at asparagine 142 and asparagine 283.

Belongs to the ClpA/ClpB family. Torsin subfamily. In terms of assembly, homohexamer.

The protein resides in the endoplasmic reticulum lumen. In Xenopus laevis (African clawed frog), this protein is Torsin-2A (tor2a).